A 444-amino-acid chain; its full sequence is Tubulin beta chain (444 aa).

Positions 11, 69, 138, 142, 143, 144, 204, and 226 each coordinate GTP. Glutamate 69 lines the Mg(2+) pocket.

The protein belongs to the tubulin family. Dimer of alpha and beta chains. A typical microtubule is a hollow water-filled tube with an outer diameter of 25 nm and an inner diameter of 15 nM. Alpha-beta heterodimers associate head-to-tail to form protofilaments running lengthwise along the microtubule wall with the beta-tubulin subunit facing the microtubule plus end conferring a structural polarity. Microtubules usually have 13 protofilaments but different protofilament numbers can be found in some organisms and specialized cells. Mg(2+) serves as cofactor.

It is found in the cytoplasm. The protein resides in the cytoskeleton. Functionally, tubulin is the major constituent of microtubules, a cylinder consisting of laterally associated linear protofilaments composed of alpha- and beta-tubulin heterodimers. Microtubules grow by the addition of GTP-tubulin dimers to the microtubule end, where a stabilizing cap forms. Below the cap, tubulin dimers are in GDP-bound state, owing to GTPase activity of alpha-tubulin. This Phytophthora cinnamomi (Cinnamon fungus) protein is Tubulin beta chain.